The sequence spans 347 residues: Ion-translocating oxidoreductase complex subunit D (347 aa).

A run of 4 helical transmembrane segments spans residues 15–35 (IMFL…YFFG), 36–56 (IGTL…EIII), 84–104 (IPPL…IVVA), and 114–134 (NIFN…PVYM). Threonine 182 carries the FMN phosphoryl threonine modification. The next 5 helical transmembrane spans lie at 217 to 237 (CINI…IICW), 239 to 259 (IPIS…FYSK), 261 to 281 (LFMS…AFFI), 289 to 309 (ACNN…VWII), and 315 to 335 (YPDA…LVDY).

This sequence belongs to the NqrB/RnfD family. In terms of assembly, the complex is composed of six subunits: RnfA, RnfB, RnfC, RnfD, RnfE and RnfG. The cofactor is FMN.

The protein localises to the cell inner membrane. Functionally, part of a membrane-bound complex that couples electron transfer with translocation of ions across the membrane. In Buchnera aphidicola subsp. Acyrthosiphon pisum (strain 5A), this protein is Ion-translocating oxidoreductase complex subunit D.